The following is a 504-amino-acid chain: Maturase K (504 aa).

This sequence belongs to the intron maturase 2 family. MatK subfamily.

It localises to the plastid. The protein localises to the chloroplast. In terms of biological role, usually encoded in the trnK tRNA gene intron. Probably assists in splicing its own and other chloroplast group II introns. The sequence is that of Maturase K from Calyptranthes pallens (Spicewood).